A 184-amino-acid polypeptide reads, in one-letter code: GTP cyclohydrolase 1 (184 aa).

Zn(2+) is bound by residues C75, H78, and C146.

This sequence belongs to the GTP cyclohydrolase I family. In terms of assembly, toroid-shaped homodecamer, composed of two pentamers of five dimers.

The catalysed reaction is GTP + H2O = 7,8-dihydroneopterin 3'-triphosphate + formate + H(+). Its pathway is cofactor biosynthesis; 7,8-dihydroneopterin triphosphate biosynthesis; 7,8-dihydroneopterin triphosphate from GTP: step 1/1. The polypeptide is GTP cyclohydrolase 1 (Pseudoalteromonas translucida (strain TAC 125)).